A 289-amino-acid chain; its full sequence is MDFSKGHGTENDFVVLPDPDVRIDLSAPRVAALCDRRRGLGADGILRVAKAGALAAAGVLAELPDGTSEDDWFMDYRNADGSIAEMCGNGVRVFAHYLRSTGLETRDEFVVGSRAGGKPVIVHSADGSAGEVTVDMGVVRDLGTSAATIDGKVFNGIGIDVGNPHLACVDAHLTAASLSALDLTAAPGFDPGFFPHGVNVEILTRIDSGAVDMRVHERGVGETRSCGTGTVAAATAALRFDGADSGEVKVRIPGGQVTVALSGGRATLRGPSVLVASGNLDDSWWNGLS.

Asn-11 and Asn-78 together coordinate substrate. Catalysis depends on Cys-87, which acts as the Proton donor. Residues 88-89, Asn-163, Asn-199, and 217-218 each bind substrate; these read GN and ER. Cys-226 acts as the Proton acceptor in catalysis. A substrate-binding site is contributed by 227-228; it reads GT.

It belongs to the diaminopimelate epimerase family. As to quaternary structure, homodimer.

The protein localises to the cytoplasm. It carries out the reaction (2S,6S)-2,6-diaminopimelate = meso-2,6-diaminopimelate. Its pathway is amino-acid biosynthesis; L-lysine biosynthesis via DAP pathway; DL-2,6-diaminopimelate from LL-2,6-diaminopimelate: step 1/1. Its function is as follows. Catalyzes the stereoinversion of LL-2,6-diaminopimelate (L,L-DAP) to meso-diaminopimelate (meso-DAP), a precursor of L-lysine and an essential component of the bacterial peptidoglycan. The sequence is that of Diaminopimelate epimerase from Rhodococcus opacus (strain B4).